A 270-amino-acid chain; its full sequence is uncharacterized protein (270 aa).

His-171 serves as the catalytic Proton donor. The active-site Nucleophile is Cys-261.

This sequence belongs to the DDAH family.

This is an uncharacterized protein from Aeropyrum pernix (strain ATCC 700893 / DSM 11879 / JCM 9820 / NBRC 100138 / K1).